Consider the following 256-residue polypeptide: Small ribosomal subunit protein bS18m (256 aa).

Residues 19-106 are disordered; the sequence is GQRTAQFSTT…GGQRYGSNSQ (88 aa). Residues 21–30 show a composition bias toward polar residues; the sequence is RTAQFSTTSP. Over residues 44 to 66 the composition is skewed to low complexity; sequence NAPRTNTNTSSPSSNNNNNAGSS.

It belongs to the bacterial ribosomal protein bS18 family. As to quaternary structure, component of the mitochondrial small ribosomal subunit (mt-SSU). Mature N.crassa 74S mitochondrial ribosomes consist of a small (37S) and a large (54S) subunit. The 37S small subunit contains a 16S ribosomal RNA (16S mt-rRNA) and 32 different proteins. The 54S large subunit contains a 23S rRNA (23S mt-rRNA) and 42 different proteins.

Its subcellular location is the mitochondrion. Component of the mitochondrial ribosome (mitoribosome), a dedicated translation machinery responsible for the synthesis of mitochondrial genome-encoded proteins, including at least some of the essential transmembrane subunits of the mitochondrial respiratory chain. The mitoribosomes are attached to the mitochondrial inner membrane and translation products are cotranslationally integrated into the membrane. In Neurospora crassa (strain ATCC 24698 / 74-OR23-1A / CBS 708.71 / DSM 1257 / FGSC 987), this protein is Small ribosomal subunit protein bS18m (rsm18).